The following is a 321-amino-acid chain: uncharacterized protein (321 aa).

The disordered stretch occupies residues 157 to 220 (TLEQPIEEDF…EGAEEDSHEH (64 aa)). The span at 161-214 (PIEEDFDEQDENDQNERDEDDAEEQEEDEVEEEEEEQQEEEEGENDEELTEGAE) shows a compositional bias: acidic residues. Positions 167–212 (DEQDENDQNERDEDDAEEQEEDEVEEEEEEQQEEEEGENDEELTEG) form a coiled coil.

This is an uncharacterized protein from Dictyostelium discoideum (Social amoeba).